The chain runs to 598 residues: Elongation factor 4 (598 aa).

In terms of domain architecture, tr-type G spans 5 to 187; sequence SHIRNFSIIA…RLVATIPAPT (183 aa). Residues 17–22 and 134–137 each bind GTP; these read DHGKST and NKMD.

The protein belongs to the TRAFAC class translation factor GTPase superfamily. Classic translation factor GTPase family. LepA subfamily.

The protein localises to the cell inner membrane. The catalysed reaction is GTP + H2O = GDP + phosphate + H(+). In terms of biological role, required for accurate and efficient protein synthesis under certain stress conditions. May act as a fidelity factor of the translation reaction, by catalyzing a one-codon backward translocation of tRNAs on improperly translocated ribosomes. Back-translocation proceeds from a post-translocation (POST) complex to a pre-translocation (PRE) complex, thus giving elongation factor G a second chance to translocate the tRNAs correctly. Binds to ribosomes in a GTP-dependent manner. The sequence is that of Elongation factor 4 from Pseudomonas syringae pv. syringae (strain B728a).